The primary structure comprises 914 residues: TRPM8 channel-associated factor 2 (914 aa).

A Peptidase M60 domain is found at 541 to 840; it reads DAWMSTGLNL…TYLQLQEAFG (300 aa).

It belongs to the TCAF family. Interacts with TRPM8 (via N-terminus and C-terminus domains); the interaction inhibits TRPM8 channel activity. Interacts with TRPV6.

It localises to the cell membrane. Functionally, negatively regulates the plasma membrane cation channel TRPM8 activity. Involved in the recruitment of TRPM8 to the cell surface. Promotes prostate cancer cell migration stimulation in a TRPM8-dependent manner. The protein is TRPM8 channel-associated factor 2 of Bos taurus (Bovine).